The chain runs to 591 residues: L-fucose isomerase (591 aa).

Active-site proton acceptor residues include glutamate 337 and aspartate 361. Glutamate 337, aspartate 361, and histidine 528 together coordinate Mn(2+).

The protein belongs to the L-fucose isomerase family. Homohexamer. It depends on Mn(2+) as a cofactor.

Its subcellular location is the cytoplasm. It catalyses the reaction L-fucose = L-fuculose. It functions in the pathway carbohydrate degradation; L-fucose degradation; L-lactaldehyde and glycerone phosphate from L-fucose: step 1/3. Its function is as follows. Converts the aldose L-fucose into the corresponding ketose L-fuculose. In Escherichia coli (strain SE11), this protein is L-fucose isomerase.